A 289-amino-acid polypeptide reads, in one-letter code: Splicing factor C9orf78 homolog (289 aa).

A compositionally biased stretch (basic residues) spans 1–12 (MPVVRKIFRRRR). 2 disordered regions span residues 1-27 (MPVV…SEEV) and 86-109 (GKDK…TNRR). The segment at 5–58 (RKIFRRRRGDSESEEDEQDSEEVRLKLEETREVQNLRKRPNGVSAVALLVGEKV) is interaction with SNRNP200. Phosphoserine is present on residues serine 15 and serine 17. At tyrosine 147 the chain carries Phosphotyrosine. Basic and acidic residues predominate over residues 232–283 (LNAPIRRNKEEPKARPLRVGDTEKPEPERSPPNRKRPANEKATDDYHYEKFK). The interval 232-289 (LNAPIRRNKEEPKARPLRVGDTEKPEPERSPPNRKRPANEKATDDYHYEKFKKMNRRY) is disordered. Threonine 253 bears the Phosphothreonine mark. Phosphoserine is present on serine 261.

It belongs to the TLS1 family. In terms of assembly, component of the spliceosome. Interacts with SNRNP200; the interaction is direct. Interacts with PRPF8.

The protein localises to the nucleus. It localises to the chromosome. The protein resides in the centromere. Plays a role in pre-mRNA splicing by promoting usage of the upstream 3'-splice site at alternative NAGNAG splice sites; these are sites featuring alternative acceptor motifs separated by only a few nucleotides. May also modulate exon inclusion events. Plays a role in spliceosomal remodeling by displacing WBP4 from SNRNP200 and may act to inhibit SNRNP200 helicase activity. Binds U5 snRNA. Required for proper chromosome segregation. Not required for splicing of shelterin components. The polypeptide is Splicing factor C9orf78 homolog (Pongo abelii (Sumatran orangutan)).